The chain runs to 501 residues: MFNYVIILPLALFLLAYKFFFTSKKQRYYLPPSPSYSLPILGHHLLIKPPVHRLFHRLSNIHGPIFYLRLGSRRAVVISSSSLARECFTGQNDVIVSNRPRFLTSKYIAYNYTTIATTSYGDHWRNLRRICSLEIVSSKRLANFLHIRKEEIQRMLTRLSRDARVGKEVELESILYDLTFNNIVRMVTGKIYYGDDVSDKEEAELFKKLFTFITTNSGARHPGEYLPFMKIFGGSFEKEVKAAAKVIDEMLQRLLDECKSDKDGNTMVNHLLSLQQDDPEYYTDIIIKGLMLGIMVASSETSALTIEWAMASLLNHPKVLDKVKLEIDEIIGQDRLIEESDIANLPYLQNVVSETLRLHPAAPVLVPRSTAEDIKIGGYDVPRDTMVMVNAWAIHRDPDLWTEPERFNPERFNGGEGEKDDVRMLIAFGSGRRICPGVGLAHKIVTLALGSLIQCFDWKKVNEKEIDMSEGPGMAMRMMVPLRALCKTRPIMNKLPAYTKV.

Lys-245 is covalently cross-linked (Glycyl lysine isopeptide (Lys-Gly) (interchain with G-Cter in ubiquitin)). A helical transmembrane segment spans residues 285 to 305; the sequence is IIIKGLMLGIMVASSETSALT. Cys-435 provides a ligand contact to heme.

This sequence belongs to the cytochrome P450 family. Heme is required as a cofactor.

The protein resides in the membrane. Its pathway is secondary metabolite biosynthesis. Involved in indole glucosinolate biosynthesis. Catalyzes hydroxylation reactions of the glucosinolate indole ring. Converts indol-3-yl-methylglucosinolate (I3M) to 1-hydroxy-indol-3-yl-methylglucosinolate (1OH-I3M) intermediate. This hydroxy intermediates is converted to 1-methoxy-indol-3-yl-methylglucosinolate (1MO-I3M) by indole glucosinolate methyltransferase 1 and 2 (IGMT1 and IGMT2). The sequence is that of Cytochrome P450 81F4 from Arabidopsis thaliana (Mouse-ear cress).